Consider the following 79-residue polypeptide: Acyl carrier protein (79 aa).

The 76-residue stretch at 2 to 77 (ENIEQRVKKI…QAIDYVTAHL (76 aa)) folds into the Carrier domain. An O-(pantetheine 4'-phosphoryl)serine modification is found at S37.

This sequence belongs to the acyl carrier protein (ACP) family. 4'-phosphopantetheine is transferred from CoA to a specific serine of apo-ACP by AcpS. This modification is essential for activity because fatty acids are bound in thioester linkage to the sulfhydryl of the prosthetic group.

Its subcellular location is the cytoplasm. It participates in lipid metabolism; fatty acid biosynthesis. Functionally, carrier of the growing fatty acid chain in fatty acid biosynthesis. In Aromatoleum aromaticum (strain DSM 19018 / LMG 30748 / EbN1) (Azoarcus sp. (strain EbN1)), this protein is Acyl carrier protein.